Consider the following 582-residue polypeptide: BTB/POZ domain and ankyrin repeat-containing protein NPR1 (582 aa).

Positions 1–12 (MEPPTSHVTNAF) are enriched in polar residues. Residues 1–27 (MEPPTSHVTNAFSDSDSASVEEGDADA) form a disordered region. A BTB domain is found at 55 to 140 (ADARIAVPGG…VLDYLYSGRV (86 aa)). A C2HC NPR-type zinc finger spans residues 147 to 161 (ACLCVDEDCAHVGCH). Zn(2+)-binding residues include C150, C155, H157, and C160. ANK repeat units lie at residues 229–258 (RSNLDMITLEKSLPPDVIKQIIDARLSLGL), 269–299 (KHVRRIHRALDSDDVELVRMLLTEGQTNLDD), 301–328 (FALHYAVEHCDSKITTELLDLALADVNH), and 332–361 (RGYTVLHIAARRREPKIIVSLLTKGARPAD). Positions 391 to 526 (PSPKDRLCIE…VLDKIMDDET (136 aa)) are salicylic acid-binding core (SBC). R436 serves as a coordination point for salicylate. Disordered regions lie at residues 525-544 (ETDPVSLGRDTSAEKRKRFH) and 551-582 (QKAFHEDKEENDRSGLSSSSSSTSIGAIRPRR). The segment covering 553-563 (AFHEDKEENDR) has biased composition (basic and acidic residues). Positions 564 to 574 (SGLSSSSSSTS) are enriched in low complexity.

Belongs to the plant 'ANKYRIN-BTB/POZ' family. 'NPR1-like' subfamily. In terms of assembly, oligomer in an uninduced state; disulfide-linked. Forms activated monomer upon changes in cellular redox potential. Interacts with TGA2.2. Interacts with NRR.

It localises to the cytoplasm. It is found in the nucleus. The protein resides in the nuclear body. The protein operates within protein modification; protein ubiquitination. Salicylic acid (SA)-binding substrate-specific adapter of an E3 ubiquitin-protein ligase complex (CUL3-RBX1-BTB) which mediates the ubiquitination and subsequent proteasomal degradation of target proteins. Transcription cofactor that represses gene expression in the absence of salicylic acid (SA), when attached to negative cis-elements (W-box) with WRKY transcription factors, but stimulates gene expression upon activation by SA, when sumoylated and attached to positive cis-elements (as-1) with TGA transcription factors, thus confering immunity through a series of gene regulations ending in a significant increase in antimicrobial and defense genes expression. Key positive factor of disease resistance. Involved in defense response against the bacterial blight disease caused by Xanthomonas oryzae pv. oryzae (Xoo). Plants over-expressing NPR1/NH1 acquire high levels of resistance to Xoo, express constitutively defense genes and develop lesion-mimic spots on leaves at pre-flowering stage. Involved in basal resistance to the blast pathogen Magnaporthe oryzae. Plants over-expressing NPR1/NH1 have increased resistance to M.oryzae infection. Plays an essential role in benzothiadiazole (BTH)-induced resistance to the blast fungus disease caused by Magnaporthe oryzae. Functions as a transcriptional coactivator of TGA2.1 and LG2 in vitro. Involved in defense response against herbivore. Plants silencing NPR1/NH1 have increased herbivore-induced trypsin proteinase inhibitors and volatiles, which reduces the performance of the striped stem borer (SSB) Chilo suppressalis. The protein is BTB/POZ domain and ankyrin repeat-containing protein NPR1 of Oryza sativa subsp. indica (Rice).